Reading from the N-terminus, the 276-residue chain is MEQSIRDEMRVLPSIDPHFEIERRVAFIKRKLQDSGCKSLVLGISGGVDSTTCGRLAQLAVDQLNEESDDNGYQFIAVRLPYGEQKDEDEAQLALDFIQPTHSVSVNIKAGVDGLHAASHVALEGTGLLPTDAAKVDLVKGNVKARARMVAQYEIAGYVGGLVLGTDHSAENITGFYTKFGDGACDMAPLFGLSKRQVREVAATLGAPELLVKKVPTADLEELAPQKADEDALSLTYEQIDDFLEGKPVSQEVSDRLVAIYKMTQHKRQPIPTIYD.

43-50 (GISGGVDS) serves as a coordination point for ATP. D49 serves as a coordination point for Mg(2+). R146 is a binding site for deamido-NAD(+). T166 contacts ATP. E171 provides a ligand contact to Mg(2+). Deamido-NAD(+) is bound by residues K179 and D186. The ATP site is built by K195 and T217. Position 266-267 (266-267 (HK)) interacts with deamido-NAD(+).

It belongs to the NAD synthetase family. In terms of assembly, homodimer.

It catalyses the reaction deamido-NAD(+) + NH4(+) + ATP = AMP + diphosphate + NAD(+) + H(+). The protein operates within cofactor biosynthesis; NAD(+) biosynthesis; NAD(+) from deamido-NAD(+) (ammonia route): step 1/1. Catalyzes the ATP-dependent amidation of deamido-NAD to form NAD. Uses ammonia as a nitrogen source. The chain is NH(3)-dependent NAD(+) synthetase from Vibrio campbellii (strain ATCC BAA-1116).